A 101-amino-acid polypeptide reads, in one-letter code: Small ribosomal subunit protein uS14 (101 aa).

Over residues 1–10 (MAKKSSVEKN) the composition is skewed to basic and acidic residues. Residues 1-23 (MAKKSSVEKNNRRKRMAKNAAPK) are disordered. The segment covering 11–23 (NRRKRMAKNAAPK) has biased composition (basic residues).

This sequence belongs to the universal ribosomal protein uS14 family. In terms of assembly, part of the 30S ribosomal subunit. Contacts proteins S3 and S10.

Functionally, binds 16S rRNA, required for the assembly of 30S particles and may also be responsible for determining the conformation of the 16S rRNA at the A site. This Bradyrhizobium sp. (strain BTAi1 / ATCC BAA-1182) protein is Small ribosomal subunit protein uS14.